The primary structure comprises 544 residues: CTP synthase (544 aa).

Positions 1–267 (MAKFVFVTGG…CRQVLDVLSL (267 aa)) are amidoligase domain. CTP is bound at residue Ser13. Ser13 contacts UTP. ATP contacts are provided by residues 14–19 (SIGKGI) and Asp71. The Mg(2+) site is built by Asp71 and Glu141. Residues 148-150 (DIE), 188-193 (KTKPTQ), and Lys224 each bind CTP. UTP-binding positions include 188 to 193 (KTKPTQ) and Lys224. The region spanning 292-534 (KVALVGKYVQ…IQAASQRLPQ (243 aa)) is the Glutamine amidotransferase type-1 domain. Residue Gly354 coordinates L-glutamine. Cys381 (nucleophile; for glutamine hydrolysis) is an active-site residue. L-glutamine contacts are provided by residues 382 to 385 (LGMQ), Glu405, and Arg462. Active-site residues include His507 and Glu509.

Belongs to the CTP synthase family. In terms of assembly, homotetramer.

The enzyme catalyses UTP + L-glutamine + ATP + H2O = CTP + L-glutamate + ADP + phosphate + 2 H(+). It catalyses the reaction L-glutamine + H2O = L-glutamate + NH4(+). It carries out the reaction UTP + NH4(+) + ATP = CTP + ADP + phosphate + 2 H(+). The protein operates within pyrimidine metabolism; CTP biosynthesis via de novo pathway; CTP from UDP: step 2/2. With respect to regulation, allosterically activated by GTP, when glutamine is the substrate; GTP has no effect on the reaction when ammonia is the substrate. The allosteric effector GTP functions by stabilizing the protein conformation that binds the tetrahedral intermediate(s) formed during glutamine hydrolysis. Inhibited by the product CTP, via allosteric rather than competitive inhibition. Functionally, catalyzes the ATP-dependent amination of UTP to CTP with either L-glutamine or ammonia as the source of nitrogen. Regulates intracellular CTP levels through interactions with the four ribonucleotide triphosphates. This chain is CTP synthase, found in Synechococcus sp. (strain RCC307).